Reading from the N-terminus, the 370-residue chain is Peptidyl-prolyl cis-trans isomerase D (370 aa).

The PPIase cyclophilin-type domain occupies 11–176; the sequence is FFDISADGKP…EDWIISDCGE (166 aa). TPR repeat units lie at residues 218 to 251, 269 to 302, and 307 to 340; these read VTTLKDIGTKQLKDGNVAAAYEKYNKASGFLNDY, LSCYLNAALVALKLKDGKKTINAASNALEVEAID, and TKALYRKGMGYLLAKDEESAQKSLEEALQLSPED.

It belongs to the cyclophilin-type PPIase family. PPIase D subfamily.

Its subcellular location is the cytoplasm. The catalysed reaction is [protein]-peptidylproline (omega=180) = [protein]-peptidylproline (omega=0). PPIases accelerate the folding of proteins. It catalyzes the cis-trans isomerization of proline imidic peptide bonds in oligopeptides. This chain is Peptidyl-prolyl cis-trans isomerase D (CPR6), found in Debaryomyces hansenii (strain ATCC 36239 / CBS 767 / BCRC 21394 / JCM 1990 / NBRC 0083 / IGC 2968) (Yeast).